Here is a 220-residue protein sequence, read N- to C-terminus: RING-H2 finger protein ATL77 (220 aa).

The helical transmembrane segment at 53-73 (LMLLSILLCGIICSLGLHYII) threads the bilayer. An RING-type; atypical zinc finger spans residues 130–172 (CVICLSDFVAGEQLRVLPKCNHGFHLRCIDKWLTQHMTCPKCR).

This sequence belongs to the RING-type zinc finger family. ATL subfamily.

The protein resides in the membrane. It catalyses the reaction S-ubiquitinyl-[E2 ubiquitin-conjugating enzyme]-L-cysteine + [acceptor protein]-L-lysine = [E2 ubiquitin-conjugating enzyme]-L-cysteine + N(6)-ubiquitinyl-[acceptor protein]-L-lysine.. It participates in protein modification; protein ubiquitination. This Arabidopsis thaliana (Mouse-ear cress) protein is RING-H2 finger protein ATL77 (ATL77).